Reading from the N-terminus, the 758-residue chain is 5-methyltetrahydropteroyltriglutamate--homocysteine methyltransferase (758 aa).

5-methyltetrahydropteroyltri-L-glutamate is bound by residues Arg16–Lys19 and Lys116. Residues Ile436–Ser438 and Glu489 contribute to the L-homocysteine site. L-methionine contacts are provided by residues Ile436–Ser438 and Glu489. 5-methyltetrahydropteroyltri-L-glutamate-binding positions include Arg520 to Cys521 and Trp566. Position 604 (Asp604) interacts with L-homocysteine. Asp604 is a binding site for L-methionine. A 5-methyltetrahydropteroyltri-L-glutamate-binding site is contributed by Glu610. Zn(2+)-binding residues include His646, Cys648, and Glu670. Catalysis depends on His699, which acts as the Proton donor. Cys731 provides a ligand contact to Zn(2+).

It belongs to the vitamin-B12 independent methionine synthase family. Zn(2+) serves as cofactor.

The enzyme catalyses 5-methyltetrahydropteroyltri-L-glutamate + L-homocysteine = tetrahydropteroyltri-L-glutamate + L-methionine. Its pathway is amino-acid biosynthesis; L-methionine biosynthesis via de novo pathway; L-methionine from L-homocysteine (MetE route): step 1/1. Functionally, catalyzes the transfer of a methyl group from 5-methyltetrahydrofolate to homocysteine resulting in methionine formation. The polypeptide is 5-methyltetrahydropteroyltriglutamate--homocysteine methyltransferase (Xylella fastidiosa (strain M23)).